A 258-amino-acid chain; its full sequence is Ferredoxin--NADP reductase (258 aa).

Residues 2–102 enclose the FAD-binding FR-type domain; sequence SNLNVERVLS…RKPTGTLVTS (101 aa). Asp-17 is an NADP(+) binding site. Residues 51–54, 67–69, 74–77, and Thr-117 each bind FAD; these read RAYS, FSI, and GPLT. NADP(+) contacts are provided by residues 144–145, 181–182, and Arg-190; these read VR and TR. Residue 254 to 258 participates in FAD binding; it reads AFVEK.

It belongs to the ferredoxin--NADP reductase type 1 family. Monomer. It depends on FAD as a cofactor.

It carries out the reaction 2 reduced [2Fe-2S]-[ferredoxin] + NADP(+) + H(+) = 2 oxidized [2Fe-2S]-[ferredoxin] + NADPH. Transports electrons between ferredoxin and NADPH. The protein is Ferredoxin--NADP reductase of Azotobacter vinelandii.